A 103-amino-acid chain; its full sequence is Co-chaperonin GroES (103 aa).

Belongs to the GroES chaperonin family. Heptamer of 7 subunits arranged in a ring. Interacts with the chaperonin GroEL.

The protein localises to the cytoplasm. Together with the chaperonin GroEL, plays an essential role in assisting protein folding. The GroEL-GroES system forms a nano-cage that allows encapsulation of the non-native substrate proteins and provides a physical environment optimized to promote and accelerate protein folding. GroES binds to the apical surface of the GroEL ring, thereby capping the opening of the GroEL channel. The polypeptide is Co-chaperonin GroES (Picosynechococcus sp. (strain ATCC 27264 / PCC 7002 / PR-6) (Agmenellum quadruplicatum)).